The following is a 392-amino-acid chain: GTPase Obg (392 aa).

In terms of domain architecture, Obg spans 1–159 (MKFVDEATIL…RDLQLELMLL (159 aa)). The disordered stretch occupies residues 127 to 146 (NTRFKSSVNRTPRQKTMGTP). Residues 129-143 (RFKSSVNRTPRQKTM) are compositionally biased toward polar residues. The OBG-type G domain maps to 160–333 (ADVGMLGLPN…LCWDVMAFIK (174 aa)). GTP contacts are provided by residues 166 to 173 (GLPNAGKS), 191 to 195 (FTTLV), 213 to 216 (DIPG), 283 to 286 (NKVD), and 314 to 316 (SAA). The Mg(2+) site is built by serine 173 and threonine 193. Positions 360 to 392 (QLEEAQPEVEEDDDWDDDWDEDDEEGVETIYQR) are disordered. The segment covering 364-386 (AQPEVEEDDDWDDDWDEDDEEGV) has biased composition (acidic residues).

It belongs to the TRAFAC class OBG-HflX-like GTPase superfamily. OBG GTPase family. As to quaternary structure, monomer. The cofactor is Mg(2+).

The protein localises to the cytoplasm. Its function is as follows. An essential GTPase which binds GTP, GDP and possibly (p)ppGpp with moderate affinity, with high nucleotide exchange rates and a fairly low GTP hydrolysis rate. Plays a role in control of the cell cycle, stress response, ribosome biogenesis and in those bacteria that undergo differentiation, in morphogenesis control. The chain is GTPase Obg from Erwinia tasmaniensis (strain DSM 17950 / CFBP 7177 / CIP 109463 / NCPPB 4357 / Et1/99).